A 368-amino-acid chain; its full sequence is tRNA-specific 2-thiouridylase MnmA (368 aa).

ATP is bound by residues 11–18 (GMSGGVDS) and Met-37. The tract at residues 97-99 (NPD) is interaction with target base in tRNA. Residue Cys-102 is the Nucleophile of the active site. Cysteines 102 and 199 form a disulfide. Position 127 (Gly-127) interacts with ATP. Residues 149 to 151 (KDQ) are interaction with tRNA. The active-site Cysteine persulfide intermediate is Cys-199. The tract at residues 311–312 (RY) is interaction with tRNA.

This sequence belongs to the MnmA/TRMU family. In terms of assembly, interacts with TusE.

The protein localises to the cytoplasm. The enzyme catalyses S-sulfanyl-L-cysteinyl-[protein] + uridine(34) in tRNA + AH2 + ATP = 2-thiouridine(34) in tRNA + L-cysteinyl-[protein] + A + AMP + diphosphate + H(+). Catalyzes the 2-thiolation of uridine at the wobble position (U34) of tRNA(Lys), tRNA(Glu) and tRNA(Gln), leading to the formation of s(2)U34, the first step of tRNA-mnm(5)s(2)U34 synthesis. Sulfur is provided by IscS, via a sulfur-relay system. Binds ATP and its substrate tRNAs. The chain is tRNA-specific 2-thiouridylase MnmA from Klebsiella pneumoniae subsp. pneumoniae (strain ATCC 700721 / MGH 78578).